The chain runs to 157 residues: Phosphopantetheine adenylyltransferase (157 aa).

Residue Ser9 participates in substrate binding. Residues 9–10 and His17 each bind ATP; that span reads SF. The substrate site is built by Lys41, Leu73, and Lys87. ATP is bound by residues 88-90, Glu98, and 123-129; these read GLR and YSFLSSS.

This sequence belongs to the bacterial CoaD family. As to quaternary structure, homohexamer. The cofactor is Mg(2+).

The protein localises to the cytoplasm. It carries out the reaction (R)-4'-phosphopantetheine + ATP + H(+) = 3'-dephospho-CoA + diphosphate. Its pathway is cofactor biosynthesis; coenzyme A biosynthesis; CoA from (R)-pantothenate: step 4/5. Reversibly transfers an adenylyl group from ATP to 4'-phosphopantetheine, yielding dephospho-CoA (dPCoA) and pyrophosphate. This chain is Phosphopantetheine adenylyltransferase, found in Alkaliphilus oremlandii (strain OhILAs) (Clostridium oremlandii (strain OhILAs)).